The following is a 662-amino-acid chain: MAVLTHGSPTPSGAYFDGKGINFTLFSAHAEQVTLCLFDEQGQERQIAMPARTGDIWHGYLPGGKPGQRYGYRVSGPFDPSRGHRFNPHKLLIDPRTRALEGKVGDDPRFTGGVSQPDVRDSAAALPKCLVIHEEYDWQGDKPPAIPWGNTVIYEAHVRGLTQLHPDIPPELRGTYAALAHPALIEHLKTLGITTLELLPVQFHIDEPRLQKMGLSNYWGYNVLAPFAVDPDYASGREGISPLRELRDAIKALHNAGIEVILDVVFNHSAELDVFGPTLCQRGIDNASYYWLTPDGEYDNITGCGNALRLSHPYVTQWVIDCLNYWRDSCHVDGFRFDLGTVLGRTPAFDQHAPLFAALAADERLSACKLIAEPWDIGLGGYQLGNFPTGFSEWNDQYRDAMRGFWLRGEVPRGTFAQHFAASSRLFEQRGRLPSASINQITAHDGFTLLDLLCFNQKHNQMNGEENRDGSDNNHSNNFGCEGLVADAAIWQRRKACQRALLTTLLLSQGTPMLLAGDEQGHSQQGNNNAYCQNNILTWLDWGSADRALMTFTADLIRLRQQIPALTQDQWWQSGDSNVQWLDSQGQALSDAAWEQGCQQQLQILLSQRWLVLINATDHECEMHLPEGEWEGIPPFGVSDHAERLTTWRGSAHTICVLIKRD.

Asp-338 serves as the catalytic Nucleophile. Catalysis depends on Glu-373, which acts as the Proton donor.

Belongs to the glycosyl hydrolase 13 family.

The catalysed reaction is Hydrolysis of (1-&gt;6)-alpha-D-glucosidic linkages to branches with degrees of polymerization of three or four glucose residues in limit dextrin.. It participates in glycan degradation; glycogen degradation. Functionally, removes maltotriose and maltotetraose chains that are attached by 1,6-alpha-linkage to the limit dextrin main chain, generating a debranched limit dextrin. The chain is Glycogen debranching enzyme from Yersinia pseudotuberculosis serotype O:1b (strain IP 31758).